We begin with the raw amino-acid sequence, 87 residues long: RNA-binding protein Hfq (87 aa).

One can recognise a Sm domain in the interval 9–68 (DPFLNALRRERIPVSIFLVNGIKLQGKIQSFDQFVILLENTVNQMVYKHAISTVVPARAV).

It belongs to the Hfq family. Homohexamer.

In terms of biological role, RNA chaperone that binds small regulatory RNA (sRNAs) and mRNAs to facilitate mRNA translational regulation in response to envelope stress, environmental stress and changes in metabolite concentrations. Also binds with high specificity to tRNAs. This is RNA-binding protein Hfq from Pseudoalteromonas translucida (strain TAC 125).